Consider the following 439-residue polypeptide: tRNA-2-methylthio-N(6)-dimethylallyladenosine synthase (439 aa).

The region spanning 2–119 (KYIYIKTWGC…LAQMIDKVEK (118 aa)) is the MTTase N-terminal domain. Cys11, Cys48, Cys82, Cys156, Cys160, and Cys163 together coordinate [4Fe-4S] cluster. One can recognise a Radical SAM core domain in the interval 142-374 (KKTGYTASIS…QNCINKQTMS (233 aa)). Residues 377 to 439 (RKMLKSTQSV…HTHSLQGELI (63 aa)) form the TRAM domain.

It belongs to the methylthiotransferase family. MiaB subfamily. In terms of assembly, monomer. It depends on [4Fe-4S] cluster as a cofactor.

It is found in the cytoplasm. It carries out the reaction N(6)-dimethylallyladenosine(37) in tRNA + (sulfur carrier)-SH + AH2 + 2 S-adenosyl-L-methionine = 2-methylsulfanyl-N(6)-dimethylallyladenosine(37) in tRNA + (sulfur carrier)-H + 5'-deoxyadenosine + L-methionine + A + S-adenosyl-L-homocysteine + 2 H(+). Its function is as follows. Catalyzes the methylthiolation of N6-(dimethylallyl)adenosine (i(6)A), leading to the formation of 2-methylthio-N6-(dimethylallyl)adenosine (ms(2)i(6)A) at position 37 in tRNAs that read codons beginning with uridine. This chain is tRNA-2-methylthio-N(6)-dimethylallyladenosine synthase, found in Buchnera aphidicola subsp. Schizaphis graminum (strain Sg).